The following is a 396-amino-acid chain: Methylthioribose kinase (396 aa).

ATP-binding positions include Asn44, Lys61, and 115–117 (EDL). Asp233 is a substrate binding site. 250–252 (DPE) serves as a coordination point for ATP. A substrate-binding site is contributed by Arg340.

This sequence belongs to the methylthioribose kinase family. As to quaternary structure, homodimer.

The catalysed reaction is 5-(methylsulfanyl)-D-ribose + ATP = 5-(methylsulfanyl)-alpha-D-ribose 1-phosphate + ADP + H(+). It participates in amino-acid biosynthesis; L-methionine biosynthesis via salvage pathway; S-methyl-5-thio-alpha-D-ribose 1-phosphate from S-methyl-5'-thioadenosine (hydrolase route): step 2/2. Catalyzes the phosphorylation of methylthioribose into methylthioribose-1-phosphate. This is Methylthioribose kinase from Geobacillus thermodenitrificans (strain NG80-2).